Reading from the N-terminus, the 91-residue chain is uncharacterized protein (91 aa).

3 helical membrane-spanning segments follow: residues 6–26 (AAAVFSITIPIISAILIINFF), 37–57 (MPVFFPLLLSPIGIILAFVSI), and 68–88 (IVLNAIMFPFPFFWFIGGALL).

The protein resides in the cell membrane. This is an uncharacterized protein from Bacillus subtilis (strain 168).